We begin with the raw amino-acid sequence, 568 residues long: Phosphoprotein (568 aa).

Disordered stretches follow at residues Met1–Glu23 and Ser38–Glu320. Over residues Ile7–Gly20 the composition is skewed to basic and acidic residues. Residues Asp33 to Thr41 form an N0 binding region. Residues Leu50–Gly59 are compositionally biased toward polar residues. Ser68 is subject to Phosphoserine; by host. Residues Arg83 to Ala101 show a composition bias toward basic and acidic residues. Residue Ser125 is modified to Phosphoserine; by host. Basic and acidic residues predominate over residues Gly150–Asp168. The span at Ala191 to Ala206 shows a compositional bias: polar residues. Phosphoserine; by host is present on residues Ser192, Ser249, Ser257, and Ser260. Residues Phe344–Ser411 are multimerization. A coiled-coil region spans residues Tyr364–His429. Positions Glu412–Thr445 are l protein binding. Phosphoserine; by host occurs at positions 447 and 449. The tract at residues Asp479 to Asn568 is interaction with the nucleocapsid (N-RNA). The segment at Gln496–Lys516 is disordered.

Belongs to the respirovirus P protein family. Homotetramer. Interacts (via multimerization domain) with polymerase L; this interaction forms the polymerase complex. Interacts (via N-terminus) with N0; this interaction allows P to chaperon N0 before encapsidation and form the N-P complex. Interacts (via C-terminus) with N-RNA template; this interaction positions the polymerase on the template. Phosphorylated by PKC/PRKCZ, and other unknown kinases. Phosphorylation is necessary for viral transcription and replication. The N-terminus contains the majority of phosphorylated sites. Ser-249 is the major site of phosphorylation, but is not necessary for most functions.

Functionally, essential cofactor of the RNA polymerase L that plays a central role in the transcription and replication by forming the polymerase complex with RNA polymerase L and recruiting L to the genomic N-RNA template for RNA synthesis. Also plays a central role in the encapsidation of nascent RNA chains by forming the encapsidation complex with the nucleocapsid protein N (N-P complex). Acts as a chaperone for newly synthesized free N protein, so-called N0, allowing encapsidation of nascent RNA chains during replication. The nucleoprotein protein N prevents excessive phosphorylation of P, which leads to down-regulation of viral transcription/ replication. Participates, together with N, in the formation of viral factories (viroplasms), which are large inclusions in the host cytoplasm where replication takes place. Recruits host PI4KB and remodel the host endoplasmic reticulum membrane to form viral replication factories. The protein is Phosphoprotein (P/V/C) of Sendai virus (strain Z) (SeV).